The following is a 548-amino-acid chain: Terpene synthase 1 (548 aa).

The Mg(2+) site is built by Asp301, Asp305, Asp445, and Glu453. A DDXXD motif motif is present at residues 301–305; sequence DDTYD.

This sequence belongs to the terpene synthase family. Tpsa subfamily. It depends on Mg(2+) as a cofactor. Requires Mn(2+) as cofactor.

It catalyses the reaction (2E,6E)-farnesyl diphosphate = (+)-valencene + diphosphate. It functions in the pathway secondary metabolite biosynthesis; terpenoid biosynthesis. Its function is as follows. Sesquiterpene synthase involved in the biosynthesis of volatile compounds which contribute to fruit flavor and aroma. Mediates the conversion of (2E,6E)-farnesyl diphosphate (FPP) into (+)-valencene. No activity detected with geranyl diphosphate (GPP). This chain is Terpene synthase 1, found in Citrus sinensis (Sweet orange).